A 430-amino-acid polypeptide reads, in one-letter code: Aspartate aminotransferase, mitochondrial (430 aa).

The transit peptide at 1-29 (MALLHSGRVLSGMAAAFHPGLAAAASARA) directs the protein to the mitochondrion. Thr48 carries the post-translational modification Phosphothreonine. N6-acetyllysine is present on Lys59. Position 65 (Gly65) interacts with substrate. Lys73 bears the N6-acetyllysine; alternate mark. The residue at position 73 (Lys73) is an N6-succinyllysine; alternate. Position 82 is an N6-acetyllysine (Lys82). Lys90 bears the N6-acetyllysine; alternate mark. Residue Lys90 is modified to N6-succinyllysine; alternate. Residue Tyr96 is modified to 3'-nitrotyrosine; alternate. A Phosphotyrosine; alternate modification is found at Tyr96. N6-acetyllysine; alternate is present on residues Lys107 and Lys122. N6-succinyllysine; alternate occurs at positions 107 and 122. Ser143 carries the post-translational modification Phosphoserine. Lys159 is subject to N6-acetyllysine; alternate. N6-succinyllysine; alternate is present on Lys159. Trp162 is a binding site for substrate. An N6-acetyllysine; alternate modification is found at Lys185. Residue Lys185 is modified to N6-succinyllysine; alternate. Asn215 provides a ligand contact to substrate. Position 227 is an N6-succinyllysine (Lys227). Lys234 is subject to N6-acetyllysine. 2 positions are modified to N6-acetyllysine; alternate: Lys279 and Lys296. Lys279 bears the N6-(pyridoxal phosphate)lysine; alternate mark. At Lys296 the chain carries N6-succinyllysine; alternate. Lys302 carries the post-translational modification N6-acetyllysine. N6-acetyllysine; alternate is present on Lys309. An N6-succinyllysine; alternate modification is found at Lys309. Position 313 is an asymmetric dimethylarginine (Arg313). Residue Lys338 is modified to N6-acetyllysine; alternate. Lys338 is modified (N6-succinyllysine; alternate). Position 345 is an N6-acetyllysine (Lys345). Position 363 is an N6-acetyllysine; alternate (Lys363). Lys363 bears the N6-succinyllysine; alternate mark. N6-acetyllysine is present on residues Lys364 and Lys387. Lys396 and Lys404 each carry N6-acetyllysine; alternate. Lys396 and Lys404 each carry N6-succinyllysine; alternate. Arg407 contributes to the substrate binding site.

It belongs to the class-I pyridoxal-phosphate-dependent aminotransferase family. In terms of assembly, homodimer. Pyridoxal 5'-phosphate is required as a cofactor. As to expression, expressed in all tissues tested: liver, pancreas, kidney, heart, spleen, arterioles, and lymphocytes.

Its subcellular location is the mitochondrion matrix. It is found in the cell membrane. It catalyses the reaction L-aspartate + 2-oxoglutarate = oxaloacetate + L-glutamate. The catalysed reaction is L-kynurenine + 2-oxoglutarate = kynurenate + L-glutamate + H2O. Its function is as follows. Catalyzes the irreversible transamination of the L-tryptophan metabolite L-kynurenine to form kynurenic acid (KA). As a member of the malate-aspartate shuttle, it has a key role in the intracellular NAD(H) redox balance. Is important for metabolite exchange between mitochondria and cytosol, and for amino acid metabolism. Facilitates cellular uptake of long-chain free fatty acids. This is Aspartate aminotransferase, mitochondrial (Got2) from Rattus norvegicus (Rat).